A 470-amino-acid polypeptide reads, in one-letter code: 4-O-methyltransferase 1 (470 aa).

S-adenosyl-L-methionine contacts are provided by residues glycine 274–glycine 275, aspartate 297, aspartate 328–cysteine 329, and lysine 344. The Proton acceptor role is filled by histidine 348.

The protein belongs to the class I-like SAM-binding methyltransferase superfamily. Cation-independent O-methyltransferase family. COMT subfamily.

In terms of biological role, S-adenosyl-L-methionine-dependent methyltransferase that preferentially catalyzes the methylation of 4-OH phenolic compounds like coniferyl alcohol, vanillyl alcohol and ferrulic acid. May play a role in promoting lignin degradation by methylating and inactivating free-hydroxyl phenolic compounds, products of lignin cleavage which are known inhibitors of lignin peroxidases. In Phanerochaete chrysosporium (strain RP-78 / ATCC MYA-4764 / FGSC 9002) (White-rot fungus), this protein is 4-O-methyltransferase 1.